The sequence spans 490 residues: Dual specificity protein kinase CLK3 (490 aa).

Residues 1–138 are disordered; the sequence is MHHCKRYRSP…SKRSSRSVED (138 aa). Residue Tyr-7 is modified to Phosphotyrosine. Residues Ser-9, Ser-49, Ser-51, Ser-67, Ser-76, and Ser-78 each carry the phosphoserine modification. Basic and acidic residues-rich tracts occupy residues 26 to 56 and 63 to 76; these read YSRE…DRLP and ERRD…EERS. Residues 88 to 116 show a composition bias toward basic residues; that stretch reads RSRHRRRSRERGPYRTRKHAHHCHKRRTR. The span at 117–130 shows a compositional bias: low complexity; sequence SCSSASSRSQQSSK. The residue at position 135 (Ser-135) is a Phosphoserine. In terms of domain architecture, Protein kinase spans 156–472; that stretch reads YEIVGNLGEG…LAEALLHPFF (317 aa). ATP contacts are provided by residues 162-170 and Lys-186; that span reads LGEGTFGKV. Asp-283 acts as the Proton acceptor in catalysis.

It belongs to the protein kinase superfamily. CMGC Ser/Thr protein kinase family. Lammer subfamily. In terms of processing, autophosphorylates on all three types of residues. In terms of tissue distribution, endothelial cells.

The protein resides in the nucleus. The protein localises to the cytoplasm. It localises to the cytoplasmic vesicle. Its subcellular location is the secretory vesicle. It is found in the acrosome. The protein resides in the nucleus speckle. The enzyme catalyses L-seryl-[protein] + ATP = O-phospho-L-seryl-[protein] + ADP + H(+). The catalysed reaction is L-threonyl-[protein] + ATP = O-phospho-L-threonyl-[protein] + ADP + H(+). It carries out the reaction L-tyrosyl-[protein] + ATP = O-phospho-L-tyrosyl-[protein] + ADP + H(+). Its activity is regulated as follows. Leucettine L41 inhibits its kinase activity and affects the regulation of alternative splicing mediated by phosphorylation of SR proteins. Its function is as follows. Dual specificity kinase acting on both serine/threonine and tyrosine-containing substrates. Phosphorylates serine- and arginine-rich (SR) proteins of the spliceosomal complex. May be a constituent of a network of regulatory mechanisms that enable SR proteins to control RNA splicing and can cause redistribution of SR proteins from speckles to a diffuse nucleoplasmic distribution. Phosphorylates SRSF1 and SRSF3. Regulates the alternative splicing of tissue factor (F3) pre-mRNA in endothelial cells. In Homo sapiens (Human), this protein is Dual specificity protein kinase CLK3.